The primary structure comprises 247 residues: tRNA pseudouridine synthase A (247 aa).

Asp53 functions as the Nucleophile in the catalytic mechanism. Tyr112 contributes to the substrate binding site.

It belongs to the tRNA pseudouridine synthase TruA family. As to quaternary structure, homodimer.

The enzyme catalyses uridine(38/39/40) in tRNA = pseudouridine(38/39/40) in tRNA. Its function is as follows. Formation of pseudouridine at positions 38, 39 and 40 in the anticodon stem and loop of transfer RNAs. The protein is tRNA pseudouridine synthase A of Anaplasma marginale (strain Florida).